The following is a 337-amino-acid chain: MRVQDVYNVIYTHTEGEPLCIIYSGVPYPAGSTILEKRAFLEENYDWLRKALMREPRGHADMFGVFLTPPSSRDYDAGLIYIDGKEYSHMCGHGTIAVAMAMVANGLVARDPSGLTRIRFETTAGLVVAEVAHEDDRVLWTRFENVPAYVAAQDIAFELPGYGPLKADLVWGGNYFGIIDLRGTSLRIAPENGSELSRMGLIAREEIRKKVTVQHPTEAHINNLNFVTFWHEPTIEGCLYKNVHVFSAGQLDRSPGGTGTSAMMAYFEARGVIGLNQPITSEGLLGSGTFEGCLIGETTLGTVRAVRPTVKGTAGMLGTASWTINREDPVDAGFLVL.

Cys91 (proton acceptor) is an active-site residue. Substrate is bound by residues 92-93 (GH), Asp252, and 257-258 (GT).

It belongs to the proline racemase family.

It carries out the reaction trans-4-hydroxy-L-proline = cis-4-hydroxy-D-proline. In terms of biological role, catalyzes the epimerization of trans-4-hydroxy-L-proline (t4LHyp) to cis-4-hydroxy-D-proline (c4DHyp). Is likely involved in a degradation pathway that converts t4LHyp to alpha-ketoglutarate. Displays no proline racemase activity. This is 4-hydroxyproline 2-epimerase from Cereibacter sphaeroides (strain ATCC 17029 / ATH 2.4.9) (Rhodobacter sphaeroides).